Here is a 175-residue protein sequence, read N- to C-terminus: Pituitary adenylate cyclase-activating polypeptide (175 aa).

The signal sequence occupies residues 1–24 (MTMCSGARLALLVYGIIMHNSVSC). A propeptide spanning residues 25-78 (SPAAGLSFPGIRPEEEAYDQDGNPLQDFYDWDPPGAGSPASALRDAYALYYPAD) is cleaved from the precursor. The interval 149-157 (VKKYLAAVL) is important for receptor binding. Residue leucine 157 is modified to Leucine amide. Lysine 168 carries the lysine amide modification. Residues 172-175 (IAYL) constitute a propeptide that is removed on maturation.

This sequence belongs to the glucagon family.

Its subcellular location is the secreted. Functionally, PACAP is a neuropeptide involved in diverse array of physiological processes through activating the PACAP subfamily of class B1 G protein-coupled receptors: VIP receptor 1 (VIPR1), VIP receptor 2 (VIPR2), and PACAP type I receptor (ADCYAP1R1). Exerts neuroprotective and general cytoprotective effects due to anti-apoptotic, anti-inflammatory, and antioxidant actions. Promotes neuron projection development through the RAPGEF2/Rap1/B-Raf/ERK pathway. In chromaffin cells, induces long-lasting increase of intracellular calcium concentrations and neuroendocrine secretion. Involved in the control of glucose homeostasis, induces insulin secretion by pancreatic beta cells. PACAP exists in two bioactive forms from proteolysis of the same precursor protein, PACAP27 and PACAP38, which differ by eleven amino acid residues in the C-terminus. The protein is Pituitary adenylate cyclase-activating polypeptide (Adcyap1) of Rattus norvegicus (Rat).